Consider the following 84-residue polypeptide: ATP synthase subunit c (84 aa).

A run of 2 helical transmembrane segments spans residues 21 to 38 (ALGA…IGKI) and 60 to 80 (MIII…VCLL).

It belongs to the ATPase C chain family. F-type ATPases have 2 components, F(1) - the catalytic core - and F(0) - the membrane proton channel. F(1) has five subunits: alpha(3), beta(3), gamma(1), delta(1), epsilon(1). F(0) has three main subunits: a(1), b(2) and c(10-14). The alpha and beta chains form an alternating ring which encloses part of the gamma chain. F(1) is attached to F(0) by a central stalk formed by the gamma and epsilon chains, while a peripheral stalk is formed by the delta and b chains.

It localises to the cell inner membrane. Its function is as follows. F(1)F(0) ATP synthase produces ATP from ADP in the presence of a proton or sodium gradient. F-type ATPases consist of two structural domains, F(1) containing the extramembraneous catalytic core and F(0) containing the membrane proton channel, linked together by a central stalk and a peripheral stalk. During catalysis, ATP synthesis in the catalytic domain of F(1) is coupled via a rotary mechanism of the central stalk subunits to proton translocation. In terms of biological role, key component of the F(0) channel; it plays a direct role in translocation across the membrane. A homomeric c-ring of between 10-14 subunits forms the central stalk rotor element with the F(1) delta and epsilon subunits. The sequence is that of ATP synthase subunit c from Phocaeicola vulgatus (strain ATCC 8482 / DSM 1447 / JCM 5826 / CCUG 4940 / NBRC 14291 / NCTC 11154) (Bacteroides vulgatus).